We begin with the raw amino-acid sequence, 388 residues long: Fibrinogen- and Ig-binding protein (388 aa).

A signal peptide spans 1 to 41 (MSKTNPNKLYSLRKLKTGTASVAVDLTVLGTGLANTTDVKA). D repeat units follow at residues 288–293 (EKLEAE), 294–299 (AKALKE), 302–307 (AKQAEE), and 309–314 (AKLKAD). The tract at residues 308–362 (LAKLKADKASGAQKPDTKPGNKEVPTRPSQTRTNTNKAPMAQTKRQLPSTGEETT) is disordered. Over residues 322–332 (PDTKPGNKEVP) the composition is skewed to basic and acidic residues. The span at 334 to 362 (RPSQTRTNTNKAPMAQTKRQLPSTGEETT) shows a compositional bias: polar residues. Positions 354–358 (LPSTG) match the LPXTG sorting signal motif. A Pentaglycyl murein peptidoglycan amidated threonine modification is found at Thr-357. A propeptide spans 358–388 (GEETTNPFFTAAALTVIASAGVLALKRKEEN) (removed by sortase).

The protein resides in the secreted. It is found in the cell wall. Functionally, binds IgG molecules of the Ig1, Ig2 and Ig4 subclasses, and also binds fibrinogen. This chain is Fibrinogen- and Ig-binding protein (mrp4), found in Streptococcus pyogenes.